The primary structure comprises 400 residues: Formate-dependent phosphoribosylglycinamide formyltransferase (400 aa).

N(1)-(5-phospho-beta-D-ribosyl)glycinamide is bound by residues 22–23 (EL) and glutamate 82. ATP is bound by residues arginine 115, lysine 157, 162 to 167 (SSGKGQ), 197 to 200 (EGFV), and glutamate 205. The ATP-grasp domain maps to 120–315 (RLAAETLGVP…EFELHARAIL (196 aa)). Residues glutamate 274 and glutamate 286 each contribute to the Mg(2+) site. N(1)-(5-phospho-beta-D-ribosyl)glycinamide contacts are provided by residues aspartate 293, lysine 362, and 369–370 (RR).

This sequence belongs to the PurK/PurT family. Homodimer.

The catalysed reaction is N(1)-(5-phospho-beta-D-ribosyl)glycinamide + formate + ATP = N(2)-formyl-N(1)-(5-phospho-beta-D-ribosyl)glycinamide + ADP + phosphate + H(+). It functions in the pathway purine metabolism; IMP biosynthesis via de novo pathway; N(2)-formyl-N(1)-(5-phospho-D-ribosyl)glycinamide from N(1)-(5-phospho-D-ribosyl)glycinamide (formate route): step 1/1. In terms of biological role, involved in the de novo purine biosynthesis. Catalyzes the transfer of formate to 5-phospho-ribosyl-glycinamide (GAR), producing 5-phospho-ribosyl-N-formylglycinamide (FGAR). Formate is provided by PurU via hydrolysis of 10-formyl-tetrahydrofolate. This is Formate-dependent phosphoribosylglycinamide formyltransferase from Mycolicibacterium smegmatis (strain ATCC 700084 / mc(2)155) (Mycobacterium smegmatis).